The chain runs to 81 residues: ATP synthase subunit c (81 aa).

2 helical membrane passes run 7–27 (LVAI…AIGF) and 55–75 (IAGL…FFIF).

The protein belongs to the ATPase C chain family. F-type ATPases have 2 components, F(1) - the catalytic core - and F(0) - the membrane proton channel. F(1) has five subunits: alpha(3), beta(3), gamma(1), delta(1), epsilon(1). F(0) has three main subunits: a(1), b(2) and c(10-14). The alpha and beta chains form an alternating ring which encloses part of the gamma chain. F(1) is attached to F(0) by a central stalk formed by the gamma and epsilon chains, while a peripheral stalk is formed by the delta and b chains.

It localises to the cell inner membrane. F(1)F(0) ATP synthase produces ATP from ADP in the presence of a proton or sodium gradient. F-type ATPases consist of two structural domains, F(1) containing the extramembraneous catalytic core and F(0) containing the membrane proton channel, linked together by a central stalk and a peripheral stalk. During catalysis, ATP synthesis in the catalytic domain of F(1) is coupled via a rotary mechanism of the central stalk subunits to proton translocation. In terms of biological role, key component of the F(0) channel; it plays a direct role in translocation across the membrane. A homomeric c-ring of between 10-14 subunits forms the central stalk rotor element with the F(1) delta and epsilon subunits. The sequence is that of ATP synthase subunit c from Acinetobacter baumannii (strain ACICU).